The primary structure comprises 280 residues: Large ribosomal subunit protein uL2 (280 aa).

2 disordered regions span residues 33–55 and 224–266; these read LTEG…RRRG and AMNP…KASQ. The span at 256–266 shows a compositional bias: basic residues; the sequence is TRTRNKNKASQ.

Belongs to the universal ribosomal protein uL2 family. As to quaternary structure, part of the 50S ribosomal subunit. Forms a bridge to the 30S subunit in the 70S ribosome.

In terms of biological role, one of the primary rRNA binding proteins. Required for association of the 30S and 50S subunits to form the 70S ribosome, for tRNA binding and peptide bond formation. It has been suggested to have peptidyltransferase activity; this is somewhat controversial. Makes several contacts with the 16S rRNA in the 70S ribosome. This is Large ribosomal subunit protein uL2 from Ruegeria pomeroyi (strain ATCC 700808 / DSM 15171 / DSS-3) (Silicibacter pomeroyi).